The following is a 520-amino-acid chain: MLARGLALRSVLVKGCQPFLSAPRECPGHPRVGTGEGACISTKTPRPFSEIPSPGDNGWINLYRFWKEKGTQKIHYHHVQNFQKYGPIYREKLGNLESVYIIDPEDVALLFKFEGPNPERYNIPPWVAYHQHYQKPVGVLLKKSGAWKKDRLVLNTEVMAPEAIKNFIPLLDTVSQDFVGVLHRRIKQQGSGKFSGDIREDLFRFAFESITNVIFGERLGMLEEIVDPEAQKFIDAVYQMFHTSVPMLNLPPDLFRLFRTKTWRDHVAAWDTIFNKAEKYTQNFYWDLRRKREFNNYPGILYRLLGNDKLLSEDVKANVTEMLAGGVDTTSMTLQWHLYEMARSLNVQEMLREEVLNARRQAQGDTSKMLQLVPLLKASIKETLRLHPISVTLQRYLVNDLVLRDYMIPAKTLVQVAVYAMGRDPAFFSNPGQFDPTRWLGKERDLIHFRNLGFGWGVRQCVGRRIAELEMTLFLIHILENFKVELQHFSDVDTIFNLILMPDKPIFLVFRPFNQDPLQA.

A mitochondrion-targeting transit peptide spans 1 to 39 (MLARGLALRSVLVKGCQPFLSAPRECPGHPRVGTGEGAC). Position 461 (cysteine 461) interacts with heme.

This sequence belongs to the cytochrome P450 family. In terms of assembly, interacts with FDX1/adrenodoxin. The cofactor is heme.

It is found in the mitochondrion inner membrane. The catalysed reaction is 6 reduced [adrenodoxin] + cholesterol + 3 O2 + 6 H(+) = 4-methylpentanal + pregnenolone + 6 oxidized [adrenodoxin] + 4 H2O. The enzyme catalyses 2 reduced [adrenodoxin] + cholesterol + O2 + 2 H(+) = (22R)-hydroxycholesterol + 2 oxidized [adrenodoxin] + H2O. It catalyses the reaction (22R)-hydroxycholesterol + 2 reduced [adrenodoxin] + O2 + 2 H(+) = (20R,22R)-20,22-dihydroxycholesterol + 2 oxidized [adrenodoxin] + H2O. It carries out the reaction (20R,22R)-20,22-dihydroxycholesterol + 2 reduced [adrenodoxin] + O2 + 2 H(+) = 4-methylpentanal + pregnenolone + 2 oxidized [adrenodoxin] + 2 H2O. It participates in lipid metabolism; C21-steroid hormone metabolism. Its pathway is steroid metabolism; cholesterol metabolism. In terms of biological role, a cytochrome P450 monooxygenase that catalyzes the side-chain hydroxylation and cleavage of cholesterol to pregnenolone, the precursor of most steroid hormones. Catalyzes three sequential oxidation reactions of cholesterol, namely the hydroxylation at C22 followed with the hydroxylation at C20 to yield 20R,22R-hydroxycholesterol that is further cleaved between C20 and C22 to yield the C21-steroid pregnenolone and 4-methylpentanal. Mechanistically, uses molecular oxygen inserting one oxygen atom into a substrate and reducing the second into a water molecule. Two electrons are provided by NADPH via a two-protein mitochondrial transfer system comprising flavoprotein FDXR (adrenodoxin/ferredoxin reductase) and nonheme iron-sulfur protein FDX1 or FDX2 (adrenodoxin/ferredoxin). This is Cholesterol side-chain cleavage enzyme, mitochondrial (CYP11A1) from Sus scrofa (Pig).